The sequence spans 172 residues: Transcriptional repressor NrdR (172 aa).

A zinc finger lies at 3–34 (CPYCRNTDTRVLDSRVADDGGSIRRRRTCSAC). The ATP-cone domain maps to 46 to 136 (LTVLKRSGAS…VYRAFESADD (91 aa)).

This sequence belongs to the NrdR family. The cofactor is Zn(2+).

Negatively regulates transcription of bacterial ribonucleotide reductase nrd genes and operons by binding to NrdR-boxes. In Nocardioides sp. (strain ATCC BAA-499 / JS614), this protein is Transcriptional repressor NrdR.